We begin with the raw amino-acid sequence, 507 residues long: Maturase K (507 aa).

It belongs to the intron maturase 2 family. MatK subfamily.

Its subcellular location is the plastid. The protein localises to the chloroplast. Its function is as follows. Usually encoded in the trnK tRNA gene intron. Probably assists in splicing its own and other chloroplast group II introns. The sequence is that of Maturase K from Cryptomeria japonica (Japanese cedar).